The primary structure comprises 148 residues: Cytochrome c-type biogenesis protein CcmE (148 aa).

The Cytoplasmic portion of the chain corresponds to 1 to 7 (MKPRSKR). Residues 8–28 (LLLVAGAVALLVGAVALVLNA) form a helical; Signal-anchor for type II membrane protein membrane-spanning segment. Over 29–148 (FQQNLVFFHT…AQKAAQTVQQ (120 aa)) the chain is Periplasmic. The heme site is built by His-123 and Tyr-127.

Belongs to the CcmE/CycJ family.

It is found in the cell inner membrane. Its function is as follows. Heme chaperone required for the biogenesis of c-type cytochromes. Transiently binds heme delivered by CcmC and transfers the heme to apo-cytochromes in a process facilitated by CcmF and CcmH. The chain is Cytochrome c-type biogenesis protein CcmE from Aromatoleum aromaticum (strain DSM 19018 / LMG 30748 / EbN1) (Azoarcus sp. (strain EbN1)).